Here is a 1515-residue protein sequence, read N- to C-terminus: Glutamate synthase [NADPH] large chain (1515 aa).

Positions 1-36 (MTTELNQGEQFVADFRANAAALTTANAYNPEDEHDA) are excised as a propeptide. Cysteine 37 serves as the catalytic For GATase activity. Residues 37–432 (CGVGFIAAID…PGEMIAVDLQ (396 aa)) form the Glutamine amidotransferase type-2 domain. Residues 916 to 937 (AKSDSGEGGEDPARFRPDKNGD) form a disordered region. Residues 926–936 (DPARFRPDKNG) are compositionally biased toward basic and acidic residues. FMN is bound by residues 1085–1142 (LSEV…IMVR) and 1086–1142 (SEVH…IMVR). The [3Fe-4S] cluster site is built by cysteine 1138, cysteine 1144, and cysteine 1149.

The protein belongs to the glutamate synthase family. Aggregate of 4 catalytic active heterodimers, consisting of a large and a small subunit. It depends on [3Fe-4S] cluster as a cofactor. Requires FAD as cofactor. The cofactor is FMN.

The catalysed reaction is 2 L-glutamate + NADP(+) = L-glutamine + 2-oxoglutarate + NADPH + H(+). It participates in amino-acid biosynthesis; L-glutamate biosynthesis via GLT pathway; L-glutamate from 2-oxoglutarate and L-glutamine (NADP(+) route): step 1/1. The protein operates within energy metabolism; nitrogen metabolism. In Azospirillum brasilense, this protein is Glutamate synthase [NADPH] large chain (gltB).